Here is a 433-residue protein sequence, read N- to C-terminus: Serine--tRNA ligase (433 aa).

An L-serine-binding site is contributed by Thr-239–Glu-241. Arg-270–Glu-272 is an ATP binding site. L-serine is bound at residue Glu-293. Residue Glu-357–Ser-360 participates in ATP binding. Ser-393 is an L-serine binding site.

The protein belongs to the class-II aminoacyl-tRNA synthetase family. Type-1 seryl-tRNA synthetase subfamily. In terms of assembly, homodimer. The tRNA molecule binds across the dimer.

The protein localises to the cytoplasm. The catalysed reaction is tRNA(Ser) + L-serine + ATP = L-seryl-tRNA(Ser) + AMP + diphosphate + H(+). It carries out the reaction tRNA(Sec) + L-serine + ATP = L-seryl-tRNA(Sec) + AMP + diphosphate + H(+). The protein operates within aminoacyl-tRNA biosynthesis; selenocysteinyl-tRNA(Sec) biosynthesis; L-seryl-tRNA(Sec) from L-serine and tRNA(Sec): step 1/1. Its function is as follows. Catalyzes the attachment of serine to tRNA(Ser). Is also able to aminoacylate tRNA(Sec) with serine, to form the misacylated tRNA L-seryl-tRNA(Sec), which will be further converted into selenocysteinyl-tRNA(Sec). This chain is Serine--tRNA ligase, found in Sorangium cellulosum (strain So ce56) (Polyangium cellulosum (strain So ce56)).